A 241-amino-acid polypeptide reads, in one-letter code: GPI-anchored hemophore RBT5 (241 aa).

Residues 1–20 form the signal peptide; it reads MLALSLLSIVSIASAAGVTA. The CFEM domain occupies 26 to 137; it reads NPYTIFPSVA…DALAKAADAA (112 aa). 4 disulfide bridges follow: Cys54–Cys94, Cys58–Cys89, Cys68–Cys75, and Cys77–Cys110. Asp72 lines the heme pocket. 2 stretches are compositionally biased toward low complexity: residues 140–154 and 163–182; these read TTAESTTAESTAAET and KETTAAETSKAAESSAPAET. The disordered stretch occupies residues 140-210; sequence TTAESTTAES…SVAQSSSSAA (71 aa). The segment covering 183-199 has biased composition (basic and acidic residues); it reads SKAEETSKAAETTKAEE. Positions 200-210 are enriched in low complexity; the sequence is SSVAQSSSSAA. A lipid anchor (GPI-anchor amidated asparagine) is attached at Asn221. Residues 222–241 constitute a propeptide, removed in mature form; the sequence is AGNMPAVAIGGVIAAVAALF.

The protein belongs to the RBT5 family. As to quaternary structure, interacts with PGA7. The GPI-anchor is attached to the protein in the endoplasmic reticulum and serves to target the protein to the cell surface. There, the glucosamine-inositol phospholipid moiety is cleaved off and the GPI-modified mannoprotein is covalently attached via its lipidless GPI glycan remnant to the 1,6-beta-glucan of the outer cell wall layer. In terms of processing, mannosylated.

It localises to the secreted. The protein resides in the cell wall. It is found in the cell membrane. Functionally, GPI-linked hyphal surface heme-binding protein involved in heme-iron utilization. Heme transfer occurs between PGA7, RBT5 and CSA2 supporting a model in which the 3 CFEM proteins cooperate in a heme-acquisition system and form a cross-cell wall heme-transfer cascade. The ability to acquire iron from host tissues is a major virulence factor of pathogenic microorganisms. Required for biofilm formation. The chain is GPI-anchored hemophore RBT5 from Candida albicans (strain SC5314 / ATCC MYA-2876) (Yeast).